A 704-amino-acid chain; its full sequence is Elongation factor G (704 aa).

A tr-type G domain is found at 8–291 (DRVRNIGIMA…AVIEYLASPV (284 aa)). GTP-binding positions include 17-24 (AHIDAGKT), 90-94 (DTPGH), and 144-147 (NKMD).

The protein belongs to the TRAFAC class translation factor GTPase superfamily. Classic translation factor GTPase family. EF-G/EF-2 subfamily.

Its subcellular location is the cytoplasm. Functionally, catalyzes the GTP-dependent ribosomal translocation step during translation elongation. During this step, the ribosome changes from the pre-translocational (PRE) to the post-translocational (POST) state as the newly formed A-site-bound peptidyl-tRNA and P-site-bound deacylated tRNA move to the P and E sites, respectively. Catalyzes the coordinated movement of the two tRNA molecules, the mRNA and conformational changes in the ribosome. The chain is Elongation factor G from Chlorobium chlorochromatii (strain CaD3).